A 218-amino-acid chain; its full sequence is N-(5'-phosphoribosyl)anthranilate isomerase (218 aa).

Belongs to the TrpF family.

It carries out the reaction N-(5-phospho-beta-D-ribosyl)anthranilate = 1-(2-carboxyphenylamino)-1-deoxy-D-ribulose 5-phosphate. The protein operates within amino-acid biosynthesis; L-tryptophan biosynthesis; L-tryptophan from chorismate: step 3/5. In Chelativorans sp. (strain BNC1), this protein is N-(5'-phosphoribosyl)anthranilate isomerase.